The primary structure comprises 555 residues: MFTPQSISQRSNGLHFKRPVTYKTTMLHPVMSVSSRSSQEESLMTVGESVSSLSMQEQQTESDTDASHSDNEENDNVDSVSNFDNLSNSIHLISLNEVDELLEDHQSTIQSSLNRGLTCTNLPDHSIKSGVTRSTVSTVRPTSKQHHQPYKYRSLLLPFEPSRGSRSMRRKIGGSRGSSLASVRRIFRSTHHLQPHKDLNSLPHEIMSKIVSHLDQRDVTMCLYVNKNMYSTAVRQLYKEPFFSSTYRFAQFVTQVSHNDELASYVQKLDLSTIRPGFESDEDDSAIFENEPIEDDAVLAGWRDWKLRGDPLYSRQFKRLTKHVSNSSSSLSCSRTSSNSNSSTESKPVKKRRSVTTAIRESRIWLSFYKKNKLYQASEEVLEALRKQNSPLVRPKVPFSTAHPISSPFLRQYSTSKDVPVGHLIHVVAACKNLTDIDISFLPLAEDYAVAGSSSYLPTASSGLLFVSDVAKLYTWKPDEIVPVSPSDLVVAMLQLRDLQVLKLRKLMWVKRDSVVRLVNENNSLVHLDLTDSGLVRGARWAIAGSVEELRQTLK.

2 disordered regions span residues 31–82 (MSVS…SVSN) and 124–147 (DHSIKSGVTRSTVSTVRPTSKQHH). Positions 32-42 (SVSSRSSQEES) are enriched in low complexity. Over residues 48–61 (ESVSSLSMQEQQTE) the composition is skewed to polar residues. The span at 129 to 142 (SGVTRSTVSTVRPT) shows a compositional bias: low complexity. The region spanning 196–246 (HKDLNSLPHEIMSKIVSHLDQRDVTMCLYVNKNMYSTAVRQLYKEPFFSST) is the F-box domain. Positions 327-346 (SSSSLSCSRTSSNSNSSTES) are enriched in low complexity. The interval 327 to 354 (SSSSLSCSRTSSNSNSSTESKPVKKRRS) is disordered.

F-box protein probably involved in ubiquitin conjugation pathway. The protein is F-box protein COS111 (COS111) of Yarrowia lipolytica (strain CLIB 122 / E 150) (Yeast).